Consider the following 131-residue polypeptide: Large ribosomal subunit protein eL32 (131 aa).

The protein belongs to the eukaryotic ribosomal protein eL32 family.

This Eremothecium gossypii (strain ATCC 10895 / CBS 109.51 / FGSC 9923 / NRRL Y-1056) (Yeast) protein is Large ribosomal subunit protein eL32 (RPL32).